Consider the following 392-residue polypeptide: Phosphoglycerate kinase (392 aa).

Substrate-binding positions include 21–23 (DFN), Arg-36, 59–62 (HLGR), Arg-113, and Arg-146. Residues Lys-197, Glu-319, and 345–348 (GGDT) each bind ATP.

This sequence belongs to the phosphoglycerate kinase family. Monomer.

It is found in the cytoplasm. The catalysed reaction is (2R)-3-phosphoglycerate + ATP = (2R)-3-phospho-glyceroyl phosphate + ADP. It participates in carbohydrate degradation; glycolysis; pyruvate from D-glyceraldehyde 3-phosphate: step 2/5. This chain is Phosphoglycerate kinase, found in Francisella tularensis subsp. novicida (strain U112).